The chain runs to 333 residues: Procathepsin L (333 aa).

Positions 1–17 (MNPTLILAAFCLGIASA) are cleaved as a signal peptide. The propeptide at 18–113 (TLTFDHSLEA…KVFQEPLFYE (96 aa)) is activation peptide. Position 122 (Glu122) interacts with Zn(2+). Disulfide bonds link Cys135–Cys178 and Cys169–Cys211. Cys138 is a catalytic residue. Zn(2+)-binding residues include Glu163, Asp184, Glu199, Glu205, and Glu209. The N-linked (GlcNAc...) asparagine glycan is linked to Asn221. Zn(2+)-binding residues include Asp227, Asp250, His253, Asp273, and Asp275. Cys269 and Cys322 are oxidised to a cystine. The active site involves His276. A propeptide spanning residues 289-291 (ESD) is cleaved from the precursor. The active site involves Asn300.

It belongs to the peptidase C1 family. As to quaternary structure, dimer of a heavy and a light chain linked by disulfide bonds. Interacts with Long isoform of CD74/Ii chain; the interaction stabilizes the conformation of mature CTSL. In terms of processing, during export along the endocytic pathway, pro-CTSL undergoes several proteolytic cleavages to generate the CTSL single-chain and two-chain mature forms, composed of a heavy chain linked to a light chain by disulfide bonds. Autocleavage; produces the single-chain CTSL after cleavage of the propeptide. The cleavage can be intermolecular.

The protein localises to the lysosome. Its subcellular location is the apical cell membrane. It localises to the cytoplasmic vesicle. The protein resides in the secretory vesicle. It is found in the chromaffin granule. The protein localises to the secreted. Its subcellular location is the extracellular space. It localises to the nucleus. The enzyme catalyses Specificity close to that of papain. As compared to cathepsin B, cathepsin L exhibits higher activity toward protein substrates, but has little activity on Z-Arg-Arg-NHMec, and no peptidyl-dipeptidase activity.. With respect to regulation, inhibited by the propeptide produced by autocleavage. Long isoform of CD74/Ii chain stabilizes the conformation of mature CTSL by binding to its active site and serving as a chaperone to help maintain a pool of mature enzyme in endocytic compartments and extracellular space of APCs. IFNG enhances the conversion into the CTSL mature and active form. Inhibited by CST6. Inhibited by the glycopeptide antibiotic teicoplanin. Inhibited by amantadine. In terms of biological role, thiol protease important for the overall degradation of proteins in lysosomes. Plays a critical for normal cellular functions such as general protein turnover, antigen processing and bone remodeling. Involved in the solubilization of cross-linked TG/thyroglobulin and in the subsequent release of thyroid hormone thyroxine (T4) by limited proteolysis of TG/thyroglobulin in the thyroid follicle lumen. In neuroendocrine chromaffin cells secretory vesicles, catalyzes the prohormone proenkephalin processing to the active enkephalin peptide neurotransmitter. In thymus, regulates CD4(+) T cell positive selection by generating the major histocompatibility complex class II (MHCII) bound peptide ligands presented by cortical thymic epithelial cells. Also mediates invariant chain processing in cortical thymic epithelial cells. Major elastin-degrading enzyme at neutral pH. Accumulates as a mature and active enzyme in the extracellular space of antigen presenting cells (APCs) to regulate degradation of the extracellular matrix in the course of inflammation. Secreted form generates endostatin from COL18A1. Critical for cardiac morphology and function. Plays an important role in hair follicle morphogenesis and cycling, as well as epidermal differentiation. Required for maximal stimulation of steroidogenesis by TIMP1. Functionally, (Microbial infection) In cells lacking TMPRSS2 expression, facilitates human coronaviruses SARS-CoV and SARS-CoV-2 infections via a slow acid-activated route with the proteolysis of coronavirus spike (S) glycoproteins in lysosome for entry into host cell. Proteolysis within lysosomes is sufficient to activate membrane fusion by coronaviruses SARS-CoV and EMC (HCoV-EMC) S as well as Zaire ebolavirus glycoproteins. Functions in the regulation of cell cycle progression through proteolytic processing of the CUX1 transcription factor. Translation initiation at downstream start sites allows the synthesis of isoforms that are devoid of a signal peptide and localize to the nucleus where they cleave the CUX1 transcription factor and modify its DNA binding properties. This chain is Procathepsin L, found in Homo sapiens (Human).